The chain runs to 223 residues: N-terminal Xaa-Pro-Lys N-methyltransferase 1 (223 aa).

Residue Met-1 is modified to N-acetylmethionine. Thr-2 bears the N-acetylthreonine; in N-terminal Xaa-Pro-Lys N-methyltransferase 1, N-terminally processed mark. S-adenosyl-L-methionine-binding positions include Gly-69, Arg-74, 91–93, 119–120, and Gln-135; these read DVT and LQ.

It belongs to the methyltransferase superfamily. NTM1 family.

The protein localises to the nucleus. The enzyme catalyses N-terminal L-alanyl-L-prolyl-L-lysyl-[protein] + 3 S-adenosyl-L-methionine = N-terminal N,N,N-trimethyl-L-alanyl-L-prolyl-L-lysyl-[protein] + 3 S-adenosyl-L-homocysteine + 3 H(+). It carries out the reaction N-terminal L-seryl-L-prolyl-L-lysyl-[protein] + 3 S-adenosyl-L-methionine = N-terminal N,N,N-trimethyl-L-seryl-L-prolyl-L-lysyl-[protein] + 3 S-adenosyl-L-homocysteine + 3 H(+). The catalysed reaction is N-terminal L-prolyl-L-prolyl-L-lysyl-[protein] + 2 S-adenosyl-L-methionine = N-terminal N,N-dimethyl-L-prolyl-L-prolyl-L-lysyl-[protein] + 2 S-adenosyl-L-homocysteine + 2 H(+). Distributive alpha-N-methyltransferase that methylates the N-terminus of target proteins containing the N-terminal motif [Ala/Gly/Pro/Ser]-Pro-Lys when the initiator Met is cleaved. Specifically catalyzes mono-, di- or tri-methylation of the exposed alpha-amino group of the Ala, Gly or Ser residue in the [Ala/Gly/Ser]-Pro-Lys motif and mono- or di-methylation of Pro in the Pro-Pro-Lys motif. Some of the substrates may be primed by NTMT2-mediated monomethylation. Catalyzes the trimethylation of the N-terminal Gly in CENPA (after removal of Met-1). Responsible for the N-terminal methylation of KLHL31, MYL2, MYL3, RB1, RCC1, RPL23A and SET. Required during mitosis for normal bipolar spindle formation and chromosome segregation via its action on RCC1. This is N-terminal Xaa-Pro-Lys N-methyltransferase 1 (NTMT1) from Bos taurus (Bovine).